The primary structure comprises 333 residues: Protein FAM170A (333 aa).

Disordered stretches follow at residues 1-45, 73-107, and 143-214; these read MKRR…GVGE, LQDS…PSYK, and ETSE…AKTP. The span at 10–29 shows a compositional bias: basic and acidic residues; sequence LEIEESKEAGISKSQEDISH. Positions 92–105 are enriched in low complexity; the sequence is TTAPSQQASSSCPS. A compositionally biased stretch (basic and acidic residues) spans 143 to 156; it reads ETSESLEKQPRMEE. Positions 170–179 are enriched in polar residues; it reads SDVSTRNLLS. Residues 185–196 show a composition bias toward basic and acidic residues; that stretch reads GEEKEHEEKPES. A Phosphothreonine modification is found at threonine 213. The segment at 224-248 adopts a C2H2-type; degenerate zinc-finger fold; it reads FRCMACCRVFATMESLQEHVQYGIR. The disordered stretch occupies residues 267–333; it reads MESESTQEEE…RKDHCDNSGS (67 aa). Residues 271 to 281 show a composition bias toward acidic residues; it reads STQEEEEDHTE. A compositionally biased stretch (basic and acidic residues) spans 282-293; it reads ETEKPKEEKAEE. Serine 308 carries the post-translational modification Phosphoserine.

This sequence belongs to the FAM170 family. Testis-specific.

It localises to the nucleus. Acts as a nuclear transcription factor that positively regulates the expression of heat shock genes. Binds to heat shock promoter elements (HSE). This Mus musculus (Mouse) protein is Protein FAM170A (Fam170a).